We begin with the raw amino-acid sequence, 349 residues long: Ethyl acetate hydrolase (349 aa).

The region spanning 67 to 300 is the AB hydrolase-1 domain; sequence YIGEGRALDP…SHDQFFTVDD (234 aa). The active-site Nucleophile is S139. Catalysis depends on residues D293 and H322.

This sequence belongs to the AB hydrolase superfamily. Acetyl esterase family. As to quaternary structure, homodimer.

The catalysed reaction is ethyl acetate + H2O = ethanol + acetate + H(+). In terms of biological role, esterase that catalyzes the hydrolysis of ethyl acetate. Involved in the degradation of short chain methyl ketones (MEK) such as 2-butanone and 2-hexanone. In vitro, can also hydrolyze vinyl acetate, 4-nitrophenyl acetate, methyl acetate, propyl acetate, benzyl acetate and methyl propionate. The highest activities are obtained with acetic acid esters, but the alcohol group also plays an important role, as compounds with two carbon atoms in the alcohol moiety, i.e., vinyl and ethyl acetate, are by far the preferred substrates. The chain is Ethyl acetate hydrolase from Pseudomonas veronii.